The following is a 152-amino-acid chain: NADH-quinone oxidoreductase subunit I 1 (152 aa).

4Fe-4S ferredoxin-type domains are found at residues 53-83 (MKLG…MKSD) and 94-123 (VTYV…LGTG). Residues Cys-63, Cys-66, Cys-69, Cys-73, Cys-103, Cys-106, Cys-109, and Cys-113 each coordinate [4Fe-4S] cluster.

It belongs to the complex I 23 kDa subunit family. NDH-1 is composed of 14 different subunits. Subunits NuoA, H, J, K, L, M, N constitute the membrane sector of the complex. It depends on [4Fe-4S] cluster as a cofactor.

The protein resides in the cell inner membrane. It catalyses the reaction a quinone + NADH + 5 H(+)(in) = a quinol + NAD(+) + 4 H(+)(out). In terms of biological role, NDH-1 shuttles electrons from NADH, via FMN and iron-sulfur (Fe-S) centers, to quinones in the respiratory chain. The immediate electron acceptor for the enzyme in this species is believed to be ubiquinone. Couples the redox reaction to proton translocation (for every two electrons transferred, four hydrogen ions are translocated across the cytoplasmic membrane), and thus conserves the redox energy in a proton gradient. This chain is NADH-quinone oxidoreductase subunit I 1, found in Koribacter versatilis (strain Ellin345).